A 61-amino-acid chain; its full sequence is SPbeta prophage-derived uncharacterized protein YotK (61 aa).

A coiled-coil region spans residues serine 7 to lysine 57.

The sequence is that of SPbeta prophage-derived uncharacterized protein YotK (yotK) from Bacillus subtilis (strain 168).